The primary structure comprises 208 residues: dITP/XTP pyrophosphatase (208 aa).

A substrate-binding site is contributed by 17–22 (SNNPGK). Asp-49 and Asp-78 together coordinate Mg(2+). Catalysis depends on Asp-78, which acts as the Proton acceptor. Residues Ser-79, 164 to 167 (FGYD), Lys-187, and 192 to 193 (HR) contribute to the substrate site.

Belongs to the HAM1 NTPase family. In terms of assembly, homodimer. Mg(2+) serves as cofactor.

It catalyses the reaction XTP + H2O = XMP + diphosphate + H(+). The enzyme catalyses dITP + H2O = dIMP + diphosphate + H(+). It carries out the reaction ITP + H2O = IMP + diphosphate + H(+). Pyrophosphatase that catalyzes the hydrolysis of nucleoside triphosphates to their monophosphate derivatives, with a high preference for the non-canonical purine nucleotides XTP (xanthosine triphosphate), dITP (deoxyinosine triphosphate) and ITP. Seems to function as a house-cleaning enzyme that removes non-canonical purine nucleotides from the nucleotide pool, thus preventing their incorporation into DNA/RNA and avoiding chromosomal lesions. This Burkholderia pseudomallei (strain K96243) protein is dITP/XTP pyrophosphatase.